The sequence spans 131 residues: Capsid protein (131 aa).

Glutamine 2 and tyrosine 131 together coordinate Ca(2+).

It belongs to the Leviviricetes capsid protein family. As to quaternary structure, homodimer. The capsid proteins form dimers that assemble by group of 5. Twelve such pentamers are linked together with free dimers. The homodimers binds to the viral RNA via an operator hairpin, but also to many other RNA sequences in the viral genome; this interaction probably shifts the virus from the replicative to the assembly phase and ensures specific encapsidation of the viral genome.

The protein resides in the virion. Functionally, capsid protein self-assembles to form an icosahedral capsid with a T=3 symmetry, about 26 nm in diameter, and consisting of 89 capsid proteins dimers (178 capsid proteins). Involved in viral genome encapsidation through the interaction between a capsid protein dimer and the multiple packaging signals present in the RNA genome. The capsid also contains 1 copy of the A2 maturation protein. Acts as a translational repressor of viral replicase synthesis late in infection. This latter function is the result of capsid protein interaction with an RNA hairpin which contains the replicase ribosome-binding site. In Pseudomonas phage PRR1 (Bacteriophage PRR1), this protein is Capsid protein.